The primary structure comprises 258 residues: Imidazole glycerol phosphate synthase subunit HisF (258 aa).

Residues D11 and D130 contribute to the active site.

It belongs to the HisA/HisF family. Heterodimer of HisH and HisF.

It localises to the cytoplasm. The catalysed reaction is 5-[(5-phospho-1-deoxy-D-ribulos-1-ylimino)methylamino]-1-(5-phospho-beta-D-ribosyl)imidazole-4-carboxamide + L-glutamine = D-erythro-1-(imidazol-4-yl)glycerol 3-phosphate + 5-amino-1-(5-phospho-beta-D-ribosyl)imidazole-4-carboxamide + L-glutamate + H(+). The protein operates within amino-acid biosynthesis; L-histidine biosynthesis; L-histidine from 5-phospho-alpha-D-ribose 1-diphosphate: step 5/9. IGPS catalyzes the conversion of PRFAR and glutamine to IGP, AICAR and glutamate. The HisF subunit catalyzes the cyclization activity that produces IGP and AICAR from PRFAR using the ammonia provided by the HisH subunit. This chain is Imidazole glycerol phosphate synthase subunit HisF, found in Rhodopseudomonas palustris (strain BisB18).